Consider the following 601-residue polypeptide: uncharacterized protein (601 aa).

The protein belongs to the chlamydial CPn_1016/CT_858/TC_0248 family.

This is an uncharacterized protein from Chlamydia muridarum (strain MoPn / Nigg).